The following is a 369-amino-acid chain: Methylthioribose-1-phosphate isomerase (369 aa).

Position 1 is an N-acetylmethionine (methionine 1). An Omega-N-methylarginine modification is found at arginine 158. Aspartate 248 functions as the Proton donor in the catalytic mechanism. Residue serine 366 is modified to Phosphoserine.

Belongs to the eIF-2B alpha/beta/delta subunits family. MtnA subfamily.

Its subcellular location is the cytoplasm. It localises to the nucleus. It carries out the reaction 5-(methylsulfanyl)-alpha-D-ribose 1-phosphate = 5-(methylsulfanyl)-D-ribulose 1-phosphate. It participates in amino-acid biosynthesis; L-methionine biosynthesis via salvage pathway; L-methionine from S-methyl-5-thio-alpha-D-ribose 1-phosphate: step 1/6. In terms of biological role, catalyzes the interconversion of methylthioribose-1-phosphate (MTR-1-P) into methylthioribulose-1-phosphate (MTRu-1-P). This is Methylthioribose-1-phosphate isomerase (Mri1) from Rattus norvegicus (Rat).